A 690-amino-acid chain; its full sequence is Eukaryotic translation initiation factor 3 subunit B (690 aa).

The span at 1–11 (MAKKKSEEHSG) shows a compositional bias: basic and acidic residues. A disordered region spans residues 1–36 (MAKKKSEEHSGADANDSDYQEEPNFEDPPGFVDNIS). The segment covering 15–25 (NDSDYQEEPNF) has biased composition (acidic residues). The RRM domain maps to 57-141 (SVVVVDNIPK…HTFAVNLFTD (85 aa)). WD repeat units follow at residues 207–246 (TRER…KIQK), 293–331 (DGMS…LLDL), 334–369 (IKIP…TLME), 442–484 (EIRE…KPSL), and 530–575 (PDHF…IKRT). Residues 595–645 (EEKQKEIKKNLKKYYAAFEQKDRLRLTRASKELLEKRSQLRETFMEYRNKR) adopt a coiled-coil conformation.

This sequence belongs to the eIF-3 subunit B family. Component of the eukaryotic translation initiation factor 3 (eIF-3) complex. The eIF-3 complex interacts with pix. Interacts with mxt.

Its subcellular location is the cytoplasm. In terms of biological role, RNA-binding component of the eukaryotic translation initiation factor 3 (eIF-3) complex, which is involved in protein synthesis of a specialized repertoire of mRNAs and, together with other initiation factors, stimulates binding of mRNA and methionyl-tRNAi to the 40S ribosome. The eIF-3 complex specifically targets and initiates translation of a subset of mRNAs involved in cell proliferation. In Drosophila simulans (Fruit fly), this protein is Eukaryotic translation initiation factor 3 subunit B.